A 239-amino-acid chain; its full sequence is tRNA (guanine-N(7)-)-methyltransferase (239 aa).

Residues Glu69, Glu94, Asp121, and Asp144 each coordinate S-adenosyl-L-methionine. Asp144 is a catalytic residue. Lys148 provides a ligand contact to substrate. The tract at residues 150 to 155 (RHNKRR) is interaction with RNA. Substrate-binding positions include Asp180 and 217-220 (TKFE).

Belongs to the class I-like SAM-binding methyltransferase superfamily. TrmB family. In terms of assembly, monomer.

It carries out the reaction guanosine(46) in tRNA + S-adenosyl-L-methionine = N(7)-methylguanosine(46) in tRNA + S-adenosyl-L-homocysteine. It functions in the pathway tRNA modification; N(7)-methylguanine-tRNA biosynthesis. In terms of biological role, catalyzes the formation of N(7)-methylguanine at position 46 (m7G46) in tRNA. The protein is tRNA (guanine-N(7)-)-methyltransferase of Yersinia pestis (strain Pestoides F).